The sequence spans 78 residues: Large ribosomal subunit protein bL28 (78 aa).

Residues 1–21 (MSRVCQVTGKKPMVGNNRSHA) are disordered.

This sequence belongs to the bacterial ribosomal protein bL28 family.

The chain is Large ribosomal subunit protein bL28 from Shewanella loihica (strain ATCC BAA-1088 / PV-4).